We begin with the raw amino-acid sequence, 482 residues long: ATP synthase subunit beta (482 aa).

162-169 (GGAGVGKT) lines the ATP pocket.

It belongs to the ATPase alpha/beta chains family. In terms of assembly, F-type ATPases have 2 components, CF(1) - the catalytic core - and CF(0) - the membrane proton channel. CF(1) has five subunits: alpha(3), beta(3), gamma(1), delta(1), epsilon(1). CF(0) has four main subunits: a(1), b(1), b'(1) and c(9-12).

It localises to the cellular thylakoid membrane. The catalysed reaction is ATP + H2O + 4 H(+)(in) = ADP + phosphate + 5 H(+)(out). Produces ATP from ADP in the presence of a proton gradient across the membrane. The catalytic sites are hosted primarily by the beta subunits. This Synechococcus sp. (strain PCC 6716) protein is ATP synthase subunit beta.